A 510-amino-acid chain; its full sequence is Gelatinase (510 aa).

The first 30 residues, 1 to 30 (MMKGNKILYILGTGIFVGSSCLFSSLFVAA), serve as a signal peptide directing secretion. Positions 31–192 (EEQVYSESEV…IMEKQDLTEH (162 aa)) are excised as a propeptide. Residue Asp324 participates in Ca(2+) binding. Residue His328 coordinates Zn(2+). Glu329 is an active-site residue. Residues His332 and Glu352 each coordinate Zn(2+). Residue Ser376 participates in Ca(2+) binding. Catalysis depends on His419, which acts as the Proton donor.

The protein belongs to the peptidase M4 family.

Its subcellular location is the secreted. It catalyses the reaction Preferential cleavage: Xaa-|-Leu, Xaa-|-Phe, Xaa-|-Tyr, Xaa-|-Ala.. Inhibited by L-leucine hydroxamate and phosphoramidon. Not inhibited by phenylmethanesulfonyl fluoride. Reversibly inactivated by straight-chain aliphatic alcohols. Functionally, metalloprotease capable of the hydrolysis of insoluble hydrophobic substrates. Hydrolyzes azocoll and gelatin and, at a lower rate, soluble and insoluble collagens. Does not cleave short synthetic peptides. Preferentially hydrolyzes the 24-Phe-|-Phe-25 bond in the insulin B-chain, followed by the 5-His-|-Leu-6 bond. Inactivates endothelin-1, primarily by cleavage of the 5-Ser-|-Leu-6 and 16-His-|-Leu-17 bonds. Hydrolyzes the alpha chain of C3 to generate a C3b-like protein. Inhibits complement-mediated hemolysis and opsinization of bacteria. Hydrolyzes the insect antimicrobial peptide cecropin. Decreases the length of E.faecalis chains via the activation of autolysin. Degrades polymerized fibrin. The polypeptide is Gelatinase (Enterococcus faecalis (strain ATCC 700802 / V583)).